Consider the following 481-residue polypeptide: Inosine-5'-monophosphate dehydrogenase (481 aa).

CBS domains follow at residues 92 to 148 (VIND…SKKV) and 152 to 209 (MTKM…PEAN). NAD(+)-binding positions include D244 and 293 to 295 (GIG). G295 and G297 together coordinate K(+). S298 contributes to the IMP binding site. C300 lines the K(+) pocket. Residue C300 is the Thioimidate intermediate of the active site. Residues 333–335 (DGG), 356–357 (GS), and 380–384 (YRGMG) contribute to the IMP site. The Proton acceptor role is filled by R396. E410 contributes to the IMP binding site. E464, S465, and H466 together coordinate K(+).

It belongs to the IMPDH/GMPR family. As to quaternary structure, homotetramer. It depends on K(+) as a cofactor.

The catalysed reaction is IMP + NAD(+) + H2O = XMP + NADH + H(+). It functions in the pathway purine metabolism; XMP biosynthesis via de novo pathway; XMP from IMP: step 1/1. Mycophenolic acid (MPA) is a non-competitive inhibitor that prevents formation of the closed enzyme conformation by binding to the same site as the amobile flap. In contrast, mizoribine monophosphate (MZP) is a competitive inhibitor that induces the closed conformation. MPA is a potent inhibitor of mammalian IMPDHs but a poor inhibitor of the bacterial enzymes. MZP is a more potent inhibitor of bacterial IMPDH. Functionally, catalyzes the conversion of inosine 5'-phosphate (IMP) to xanthosine 5'-phosphate (XMP), the first committed and rate-limiting step in the de novo synthesis of guanine nucleotides, and therefore plays an important role in the regulation of cell growth. The chain is Inosine-5'-monophosphate dehydrogenase from Helicobacter pylori (strain J99 / ATCC 700824) (Campylobacter pylori J99).